Consider the following 198-residue polypeptide: Probable chemoreceptor glutamine deamidase CheD (198 aa).

The protein belongs to the CheD family.

The catalysed reaction is L-glutaminyl-[protein] + H2O = L-glutamyl-[protein] + NH4(+). Probably deamidates glutamine residues to glutamate on methyl-accepting chemotaxis receptors (MCPs), playing an important role in chemotaxis. The sequence is that of Probable chemoreceptor glutamine deamidase CheD from Stenotrophomonas maltophilia (strain K279a).